A 318-amino-acid polypeptide reads, in one-letter code: Taste receptor type 2 member 14 (318 aa).

At M1–N7 the chain is on the extracellular side. Residues I8 to A28 form a helical membrane-spanning segment. Residues L29–R55 are Cytoplasmic-facing. A helical membrane pass occupies residues I56–F76. Over A77 to N87 the chain is Extracellular. The cholesterol site is built by T86 and W89. Residues I88 to F108 traverse the membrane as a helical segment. The Cytoplasmic portion of the chain corresponds to L109 to V129. Residues V130 to I150 traverse the membrane as a helical segment. The Extracellular segment spans residues H151–S184. N153 and N162 each carry an N-linked (GlcNAc...) asparagine glycan. A180 contributes to the cholesterol binding site. The chain crosses the membrane as a helical span at residues V185–L205. The Cytoplasmic portion of the chain corresponds to W206–Q232. Residues T233–W253 form a helical membrane-spanning segment. Residues T254–N261 lie on the Extracellular side of the membrane. The chain crosses the membrane as a helical span at residues L262 to I282. The cholesterol site is built by L265 and V268. Over L283 to S317 the chain is Cytoplasmic.

It belongs to the G-protein coupled receptor T2R family. As to quaternary structure, core component of the TAS2R14-GNAI1 complex, consisting of TAS2R14, GNAI1, GNB1 and GNG2; within the complex interacts with GNAI1. Core component of the TAS2R14-GNAT3 complex, consisting of TAS2R14, GNAT3, GNB1 and GNG2; within the complex interacts with GNAT3. Core component of the TAS2R14-GNAS2 complex, consisting of TAS2R14, GNAS2, GNB1 and GNG2; within the complex interacts with GNAS2.

It is found in the membrane. The enzyme catalyses Ca(2+)(in) = Ca(2+)(out). It carries out the reaction 3',5'-cyclic AMP(in) = 3',5'-cyclic AMP(out). Basal activity is enhanced by binding to bitter tastants, such as flufenamic acid and aristolochic acid. Regulated by cholesterol in a concentration-dependent manner. Gustducin-linked G-protein coupled receptor that plays a role in the perception of bitterness. The activity of this receptor stimulates GNAT3, activating the gustducin G-protein pathway. Likely plays a role in sensing the chemical composition of the gastrointestinal content and other extra-oral tissues via the inhibitory G-protein pathways. The protein is Taste receptor type 2 member 14 (TAS2R14) of Pongo pygmaeus (Bornean orangutan).